An 817-amino-acid polypeptide reads, in one-letter code: DNA gyrase subunit A (817 aa).

Positions 39–505 constitute a Topo IIA-type catalytic domain; that stretch reads LPDARDGLKP…AVEDVSIEDL (467 aa). The active-site O-(5'-phospho-DNA)-tyrosine intermediate is the tyrosine 127. The GyrA-box signature appears at 532 to 538; sequence QGRGGKG.

It belongs to the type II topoisomerase GyrA/ParC subunit family. As to quaternary structure, heterotetramer, composed of two GyrA and two GyrB chains. In the heterotetramer, GyrA contains the active site tyrosine that forms a transient covalent intermediate with DNA, while GyrB binds cofactors and catalyzes ATP hydrolysis.

It is found in the cytoplasm. The enzyme catalyses ATP-dependent breakage, passage and rejoining of double-stranded DNA.. In terms of biological role, a type II topoisomerase that negatively supercoils closed circular double-stranded (ds) DNA in an ATP-dependent manner to modulate DNA topology and maintain chromosomes in an underwound state. Negative supercoiling favors strand separation, and DNA replication, transcription, recombination and repair, all of which involve strand separation. Also able to catalyze the interconversion of other topological isomers of dsDNA rings, including catenanes and knotted rings. Type II topoisomerases break and join 2 DNA strands simultaneously in an ATP-dependent manner. This Aminobacterium colombiense (strain DSM 12261 / ALA-1) protein is DNA gyrase subunit A.